A 513-amino-acid chain; its full sequence is ATP synthase subunit alpha (513 aa).

Residue 169–176 coordinates ATP; the sequence is GDRQTGKT.

Belongs to the ATPase alpha/beta chains family. As to quaternary structure, F-type ATPases have 2 components, CF(1) - the catalytic core - and CF(0) - the membrane proton channel. CF(1) has five subunits: alpha(3), beta(3), gamma(1), delta(1), epsilon(1). CF(0) has three main subunits: a(1), b(2) and c(9-12). The alpha and beta chains form an alternating ring which encloses part of the gamma chain. CF(1) is attached to CF(0) by a central stalk formed by the gamma and epsilon chains, while a peripheral stalk is formed by the delta and b chains.

It localises to the cell membrane. It catalyses the reaction ATP + H2O + 4 H(+)(in) = ADP + phosphate + 5 H(+)(out). Its function is as follows. Produces ATP from ADP in the presence of a proton gradient across the membrane. The alpha chain is a regulatory subunit. The sequence is that of ATP synthase subunit alpha from Polynucleobacter asymbioticus (strain DSM 18221 / CIP 109841 / QLW-P1DMWA-1) (Polynucleobacter necessarius subsp. asymbioticus).